The sequence spans 339 residues: O-methyltransferase 7 (339 aa).

Residues glycine 186, aspartate 209, serine 232, phenylalanine 233, and lysine 246 each coordinate S-adenosyl-L-methionine. Histidine 250 serves as the catalytic Proton acceptor.

The protein belongs to the class I-like SAM-binding methyltransferase superfamily. Cation-independent O-methyltransferase family. COMT subfamily.

It catalyses the reaction (3,5-dichloro-2,4,6-trihydroxyphenyl)hexan-1-one + S-adenosyl-L-methionine = 1-(3,5-dichloro-2,6-dihydroxy-4-methoxyphenyl)hexan-1-one + S-adenosyl-L-homocysteine + H(+). The polypeptide is O-methyltransferase 7 (omt7) (Dictyostelium discoideum (Social amoeba)).